Consider the following 513-residue polypeptide: Matrix metalloproteinase-27 (513 aa).

The N-terminal stretch at 1 to 17 (MKRLLLLFLFFITFSSA) is a signal peptide. The propeptide at 18-98 (FPLVRMTENE…PRCGVPDVGQ (81 aa)) is activation peptide. N-linked (GlcNAc...) asparagine glycosylation occurs at Asn55. Positions 89–96 (PRCGVPDV) match the Cysteine switch motif. Cys91 provides a ligand contact to Zn(2+). Asn110 carries N-linked (GlcNAc...) asparagine glycosylation. Ca(2+) contacts are provided by Asp121 and Asp155. Residue His165 participates in Zn(2+) binding. Positions 173, 174, and 178 each coordinate Ca(2+). His181 contacts Zn(2+). Ca(2+)-binding residues include Gly188 and Asp192. Zn(2+) is bound at residue His194. Ca(2+)-binding residues include Asp196 and Glu199. A Zn(2+)-binding site is contributed by His216. Glu217 is an active-site residue. Positions 220 and 226 each coordinate Zn(2+). Hemopexin repeat units lie at residues 276–325 (PHAC…WPSL), 326–371 (PADL…GFPG), 373–421 (VKKI…FPGI), and 422–465 (SIRV…WFQC). A disulfide bridge links Cys279 with Cys465. Residue Asp286 coordinates Ca(2+). Ca(2+)-binding residues include Asp377 and Asp426. Asn452 is a glycosylation site (N-linked (GlcNAc...) asparagine). The required for retention in the endoplasmic reticulum stretch occupies residues 466–513 (KEPKNSSFGFDINKEKAHSGGIKILYHKSLSLFIFGIVHLLKNTSIYQ).

This sequence belongs to the peptidase M10A family. Requires Ca(2+) as cofactor. The cofactor is Zn(2+). Post-translationally, N-glycosylated. Expressed in B-cells. Expressed in a subset of endometrial macrophages related to menstruation and in ovarian and peritoneal endometriotic lesions (at protein level).

It is found in the endoplasmic reticulum. Functionally, matrix metalloproteinases degrade protein components of the extracellular matrix such as fibronectin, laminin, gelatins and/or collagens. The sequence is that of Matrix metalloproteinase-27 (MMP27) from Homo sapiens (Human).